A 107-amino-acid chain; its full sequence is Circadian clock oscillator protein KaiB (107 aa).

This sequence belongs to the KaiB family. May undergo a major conformational rearrangment; in the free state forms homooligomers. When bound to KaiC switches to a monomeric thioredoxin-fold (KaiB(fs)). The active oscillator complex is probably KaiC(6):KaiB(6).

Component of the KaiBC clock protein complex, which constitutes the main circadian regulator in cyanobacteria; it may modify the ATPase activity of KaiC. Functionally, does not stimulate dephosphorylation of endogenous KaiC, although it does stimulate dephosphorylation of KiaC from S.elongatus strain PCC 7942. Reduces the ATPase activity of KaiC by about half in vitro, which may be its function in vivo. Its function is as follows. May be a metamorphic protein which reversibly switches between an inactive tetrameric fold and a rare, thioredoxin-like monomeric fold (KaiB(fs)). KaiB(fs) binds phospho-KaiC, and perhaps clock output effectors. The chain is Circadian clock oscillator protein KaiB from Prochlorococcus marinus subsp. pastoris (strain CCMP1986 / NIES-2087 / MED4).